A 296-amino-acid chain; its full sequence is Protoheme IX farnesyltransferase (296 aa).

At 1–9 (MMFKQYLQV) the chain is on the cytoplasmic side. A helical transmembrane segment spans residues 10 to 28 (TKPGIIFGNLISVIGGFLL). Residues 29 to 37 (ASKGSIDYP) are Periplasmic-facing. The helical transmembrane segment at 38 to 56 (LFIYTLVGVSLVVASGCVF) threads the bilayer. Over 57-78 (NNFIDRDIDRKMERTKNRVLVK) the chain is Cytoplasmic. Residues 79 to 97 (GLISPGVSLVYATLLGIAG) form a helical membrane-spanning segment. Residues 98-107 (FMLLWFGANP) are Periplasmic-facing. Residues 108–126 (LACWLGVMGFVVYVGIYSL) form a helical membrane-spanning segment. The Cytoplasmic portion of the chain corresponds to 127 to 197 (YMKRHSVYGT…YQAANIPVLP (71 aa)). The helical transmembrane segment at 198 to 216 (VVKGISVAKNHITLYIIAF) threads the bilayer. The Periplasmic segment spans residues 217–228 (AVATLMLTLGGY). Residues 229 to 247 (AGYKYLVVAAAVSVWWLGM) form a helical membrane-spanning segment. The Cytoplasmic segment spans residues 248–268 (ALRGYKVEDDKVWARKLFGFS). A helical membrane pass occupies residues 269–287 (IIAITALSIMMSVDFMVPN). Residues 288 to 296 (SQSLLTYVW) lie on the Periplasmic side of the membrane.

This sequence belongs to the UbiA prenyltransferase family. Protoheme IX farnesyltransferase subfamily.

The protein localises to the cell inner membrane. It catalyses the reaction heme b + (2E,6E)-farnesyl diphosphate + H2O = Fe(II)-heme o + diphosphate. The protein operates within porphyrin-containing compound metabolism; heme O biosynthesis; heme O from protoheme: step 1/1. Converts heme B (protoheme IX) to heme O by substitution of the vinyl group on carbon 2 of heme B porphyrin ring with a hydroxyethyl farnesyl side group. The polypeptide is Protoheme IX farnesyltransferase (Salmonella arizonae (strain ATCC BAA-731 / CDC346-86 / RSK2980)).